The primary structure comprises 278 residues: Esterase dbaE (278 aa).

Catalysis depends on charge relay system residues Ser-124, Asp-220, and His-248.

This sequence belongs to the LovG family.

Its pathway is secondary metabolite biosynthesis. In terms of biological role, esterase; part of the gene cluster that mediates the biosynthesis of the antibiotic 2,4-dihydroxy-3-methyl-6-(2-oxopropyl)benzaldehyde (DHMBA) and its derivatives. The direct non-reducing polyketide synthase dbaI product is 2,4-dihydroxy-3-methyl-6-(2-oxopropyl)benzaldehyde (DHMBA), produced by condensation of one acetyl-CoA starter unit with 4 malonyl-CoA units and one methylation step. The FAD-dependent monooxygenase dbaH is responsible for the synthesis of yellow pigments derived from the oxidation of DHMBA. The roles of dbaB, C, E and F have still to be determined. This is Esterase dbaE from Emericella nidulans (strain FGSC A4 / ATCC 38163 / CBS 112.46 / NRRL 194 / M139) (Aspergillus nidulans).